Here is a 766-residue protein sequence, read N- to C-terminus: Cytoplasmic polyadenylation element-binding protein 3 (766 aa).

Disordered regions lie at residues 1–35 (MSQEEVPGEIPGDIAIEKAENTVQDDVEAKNTSET), 131–179 (VPSR…ARRL), and 216–299 (PVPI…LPPR). Composition is skewed to polar residues over residues 233–256 (ETPTDSPAKTETSSISKSYGSDYQ) and 276–289 (STPNRGQGLSNRDN). Residues 310 to 332 (IFVGGVPWDITEAALKDSFGEFG) enclose the RRM domain. The disordered stretch occupies residues 578 to 602 (KAFSGPNRRSHLSSNSPSKPASLMS). Low complexity predominate over residues 589–602 (LSSNSPSKPASLMS).

Functionally, cytoplasmic polyadenylation element binding protein that binds to and regulates the translation of specific mRNAs. This is Cytoplasmic polyadenylation element-binding protein 3 (cpb-3) from Caenorhabditis remanei (Caenorhabditis vulgaris).